A 67-amino-acid chain; its full sequence is Large ribosomal subunit protein uL30 (67 aa).

The protein belongs to the universal ribosomal protein uL30 family. Part of the 50S ribosomal subunit.

The polypeptide is Large ribosomal subunit protein uL30 (Thermotoga maritima (strain ATCC 43589 / DSM 3109 / JCM 10099 / NBRC 100826 / MSB8)).